The chain runs to 1651 residues: MDSKKKSSAEAEGSKERGLVHVWQAGSFSLTPERLPGWGGKTVLQAALGVKHGVLLTEDGEVYSFGTLPWKSEAAEICPSSPLLESALVGHHVVTVATGSFHSGAVTESGVVYMWGENAAGQCAVANQQYVSEPSPVSISDSETSPLLAVRILQLACGEEHTLALSISREIWAWGTGCQLGLITTTFPVTKPQKVEHLAGRVVLQVACGAFHSLALVQCLPPQDLKPVPERCNQCSQLLITMTDKEDHVIISDSHCCPLGVTLSESQAEKHASTVTSPHPETLDGQGEVFENTVAEAELNMGSDQTTSGSAISAQQNIVGMAEVSSARTAPSYPDTQTVTAYLQKLSEHSVKENHEREEKLPQVQPLVEEAVPDLHSPPTTSTSALNSLVVSCASAVGVRVAATYEAGALSLKKVMNFYSTAPCEPGAPSGTASTGPESLKDLREEQVKQESLQGKKSSSLMDIREEESEGGSRRLSLPGLLSQVSPRLLRKAARVKTRTVVLTPTYSGEADALLPSLRTEVWTWGKGKEGQLGHGDVLPRLQPLCVKCLDGKEVIHLEAGGSHSLALTAKSQVYSWGSNTFGQLGHSEFPTTVPRLSKVSSESGVWSVAAGHGYSLFLVDTEDFQPGLYYSGRQDRAEGDTLPENPSGTTTPVLLSCSKLGYISRVTAGKDSYLALVDKNIMGYIASLHELATTERRFYSKLSEIKSQILRPLLSLEHLGTVTTVQLLQEVASRFSKLCYLIGQHGASLSSYLQGMKEARNLVIMKHSSLFLDSYTEYCTSVSNFLVMGGSQLLAKPAIDFLNKNQELLQDLSEVNDENTQLMEILNALFFLPIRRLHNYAKVLLKLATCFEVTSPEYQKLQDSSSCYESLALHLGKKRKEAEYTLSFWKTFPGKMTDSLRKPERRLLCESSNRALSLQHAGRFSVNWFILFNDALVHAQFSTHHVFPLATLWAEPLSEETGGVNGLKITTPEEQFTLISSTPQEKTKWLRAISQAVDQALRGTSDFPLYGGSSTVQRQEPPISRSAKYTFYKDTRLKDATYDGRWLSGKPHGRGVLKWPDGKVYSGTFRNGLEDGYGEYRIPNKALNKEDHYVGHWKEGKMCGQGVYSYASGEVFEGCFQDNMRHGHGLLRSGKLTSSSPSMFIGQWVMDKKAGYGVFDDITRGEKYMGMWQDDACQGNGVVVTQFGLYYEGNFHLNKMMGNGVLLSEDDTIYEGEFSDDWTLCGKGTLTMPNGDYIEGYFSGEWGSGIKITGTYFKPSLYESDKDRPKAFRKLGNLAVAADEKWRAVFDECWRQLGCESPGQGEVWKAWDNIAVALTTNRRQHKDSPEILSRSQTQTLESLEYIPQHVGAFSVEKYDDIKKYLIKACDTPLHPLGRLVETLVAVYRMTYVGVGANRRLLQEAVKEIKSYLKRIFQLVRFLFPELPEEGSTVPLSAPLPTGRRSFCTGKSDSRSESPEPGYVVTSSGLLLPVLLPRLYPPLFMLYALDNDREEDIYWECVLRLNKQPDIALLGFLGVQRKFWPATLSILGESKKVLPSTKDACFASAVECLQQISTTFTPSDKLKVIQQTFEEISQSVLASLQEDFLWSMDDLFPVFLYVVLRARIRNLGSEVHLIEDLMDPYLQHGEQGIMFTTLKACYYQIQREKLN.

RCC1 repeat units lie at residues 59–108, 109–167, and 169–218; these read DGEV…AVTE, SGVV…ALSI, and REIW…ALVQ. The disordered stretch occupies residues 444–476; that stretch reads REEQVKQESLQGKKSSSLMDIREEESEGGSRRL. Residues 450–461 show a composition bias toward polar residues; the sequence is QESLQGKKSSSL. 4 positions are modified to phosphoserine: Ser459, Ser460, Ser477, and Ser486. Thr504 is subject to Phosphothreonine. RCC1 repeat units lie at residues 519-570 and 572-621; these read RTEV…ALTA and SQVY…FLVD. At Lys527 the chain carries N6-acetyllysine. One can recognise a DH domain in the interval 684-879; that stretch reads GYIASLHELA…ESLALHLGKK (196 aa). Residues 895 to 1001 form the PH domain; the sequence is GKMTDSLRKP…RAISQAVDQA (107 aa). 8 MORN repeats span residues 1043–1065, 1066–1088, 1094–1116, 1117–1139, 1145–1167, 1169–1191, 1192–1214, and 1215–1238; these read YDGRWLSGKPHGRGVLKWPDGKV, YSGTFRNGLEDGYGEYRIPNKAL, YVGHWKEGKMCGQGVYSYASGEV, FEGCFQDNMRHGHGLLRSGKLTS, FIGQWVMDKKAGYGVFDDITRGE, YMGMWQDDACQGNGVVVTQFGLY, YEGNFHLNKMMGNGVLLSEDDTI, and YEGEFSDDWTLCGKGTLTMPNGDY. Ser1329 carries the phosphoserine modification. The region spanning 1507–1651 is the VPS9 domain; that stretch reads KQPDIALLGF…YYQIQREKLN (145 aa).

As to quaternary structure, forms a heteromeric complex with ALS2CL. Interacts with ALS2CL.

May act as a GTPase regulator. Controls survival and growth of spinal motoneurons. This Rattus norvegicus (Rat) protein is Alsin (Als2).